The following is a 721-amino-acid chain: Dipeptidyl-peptidase 5 (721 aa).

Positions 1 to 18 (MGAFRWLSIAAAASTALA) are cleaved as a signal peptide. Asparagine 75, asparagine 94, asparagine 151, and asparagine 254 each carry an N-linked (GlcNAc...) asparagine glycan. The disordered stretch occupies residues 271 to 297 (ARPINGPDSPGTPKGIKGDSSSPVFSP). N-linked (GlcNAc...) asparagine glycosylation is found at asparagine 380 and asparagine 450. The active-site Charge relay system is the serine 560. Asparagine 607 carries N-linked (GlcNAc...) asparagine glycosylation. Residues aspartate 643 and histidine 675 each act as charge relay system in the active site.

It belongs to the peptidase S9C family. Post-translationally, N-glycosylated. Expressed in mycelia and conidia.

Its subcellular location is the secreted. May be involved in metabolism of dipeptides or may affect host defense mechanisms. Has a substrate specificity limited to the hydrolysis of X-Ala, His-Ser, and Ser-Tyr dipeptides at a neutral pH optimum. The protein is Dipeptidyl-peptidase 5 of Aspergillus fumigatus (strain CBS 144.89 / FGSC A1163 / CEA10) (Neosartorya fumigata).